The primary structure comprises 88 residues: Putative membrane protein insertion efficiency factor (88 aa).

The segment at 66-88 is disordered; the sequence is DFVPPKKDKNADSEHSCKAHHHH. Residues 69 to 82 show a composition bias toward basic and acidic residues; sequence PPKKDKNADSEHSC.

The protein belongs to the UPF0161 family.

The protein localises to the cell membrane. Functionally, could be involved in insertion of integral membrane proteins into the membrane. This is Putative membrane protein insertion efficiency factor from Listeria monocytogenes serotype 4a (strain HCC23).